A 240-amino-acid polypeptide reads, in one-letter code: 1-(5-phosphoribosyl)-5-[(5-phosphoribosylamino)methylideneamino] imidazole-4-carboxamide isomerase (240 aa).

Aspartate 8 (proton acceptor) is an active-site residue. The active-site Proton donor is aspartate 129.

Belongs to the HisA/HisF family.

It localises to the cytoplasm. It catalyses the reaction 1-(5-phospho-beta-D-ribosyl)-5-[(5-phospho-beta-D-ribosylamino)methylideneamino]imidazole-4-carboxamide = 5-[(5-phospho-1-deoxy-D-ribulos-1-ylimino)methylamino]-1-(5-phospho-beta-D-ribosyl)imidazole-4-carboxamide. It functions in the pathway amino-acid biosynthesis; L-histidine biosynthesis; L-histidine from 5-phospho-alpha-D-ribose 1-diphosphate: step 4/9. The chain is 1-(5-phosphoribosyl)-5-[(5-phosphoribosylamino)methylideneamino] imidazole-4-carboxamide isomerase from Clostridium beijerinckii (strain ATCC 51743 / NCIMB 8052) (Clostridium acetobutylicum).